The chain runs to 129 residues: Small ribosomal subunit protein uS11 (129 aa).

Belongs to the universal ribosomal protein uS11 family. Part of the 30S ribosomal subunit. Interacts with proteins S7 and S18. Binds to IF-3.

Functionally, located on the platform of the 30S subunit, it bridges several disparate RNA helices of the 16S rRNA. Forms part of the Shine-Dalgarno cleft in the 70S ribosome. This chain is Small ribosomal subunit protein uS11, found in Cereibacter sphaeroides (strain ATCC 17029 / ATH 2.4.9) (Rhodobacter sphaeroides).